A 317-amino-acid polypeptide reads, in one-letter code: Acetyl-coenzyme A carboxylase carboxyl transferase subunit alpha (317 aa).

One can recognise a CoA carboxyltransferase C-terminal domain in the interval 33-294 (NLDDEITRLQ…KKRLLADLAD (262 aa)).

The protein belongs to the AccA family. In terms of assembly, acetyl-CoA carboxylase is a heterohexamer composed of biotin carboxyl carrier protein (AccB), biotin carboxylase (AccC) and two subunits each of ACCase subunit alpha (AccA) and ACCase subunit beta (AccD).

The protein resides in the cytoplasm. It carries out the reaction N(6)-carboxybiotinyl-L-lysyl-[protein] + acetyl-CoA = N(6)-biotinyl-L-lysyl-[protein] + malonyl-CoA. The protein operates within lipid metabolism; malonyl-CoA biosynthesis; malonyl-CoA from acetyl-CoA: step 1/1. Functionally, component of the acetyl coenzyme A carboxylase (ACC) complex. First, biotin carboxylase catalyzes the carboxylation of biotin on its carrier protein (BCCP) and then the CO(2) group is transferred by the carboxyltransferase to acetyl-CoA to form malonyl-CoA. The protein is Acetyl-coenzyme A carboxylase carboxyl transferase subunit alpha of Histophilus somni (strain 2336) (Haemophilus somnus).